A 213-amino-acid chain; its full sequence is Insulin-like peptide INSL6 (213 aa).

The N-terminal stretch at 1–20 (MPRLLRLSLLWLGLLLVRFS) is a signal peptide. 3 disulfides stabilise this stretch: cysteine 33/cysteine 179, cysteine 45/cysteine 192, and cysteine 178/cysteine 183. Residues 55-168 (FEEETPFSRL…SNLFWGHHPQ (114 aa)) constitute a propeptide, connecting peptide. The propeptide occupies 201-213 (LKEKRSSLVTKIY).

This sequence belongs to the insulin family. As to expression, testis specific.

Its subcellular location is the secreted. In terms of biological role, may have a role in sperm development and fertilization. This is Insulin-like peptide INSL6 (INSL6) from Homo sapiens (Human).